Consider the following 429-residue polypeptide: Histidine--tRNA ligase (429 aa).

Belongs to the class-II aminoacyl-tRNA synthetase family. In terms of assembly, homodimer.

Its subcellular location is the cytoplasm. It catalyses the reaction tRNA(His) + L-histidine + ATP = L-histidyl-tRNA(His) + AMP + diphosphate + H(+). The chain is Histidine--tRNA ligase from Escherichia fergusonii (strain ATCC 35469 / DSM 13698 / CCUG 18766 / IAM 14443 / JCM 21226 / LMG 7866 / NBRC 102419 / NCTC 12128 / CDC 0568-73).